We begin with the raw amino-acid sequence, 721 residues long: Tripartite terminase subunit 1 (721 aa).

Residues 189–217 (CLKCYEELSLVPNQGKSIRKRLAGKFCNH) form a C3H1-type zinc finger. 625–632 (YNDVFGKQ) is an ATP binding site.

It belongs to the herpesviridae TRM1 protein family. Associates with TRM2 and TRM3 to form the tripartite terminase complex. Interacts with portal protein.

The protein resides in the host nucleus. Its function is as follows. Component of the molecular motor that translocates viral genomic DNA in empty capsid during DNA packaging. Forms a tripartite terminase complex together with TRM2 and TRM3 in the host cytoplasm. Once the complex reaches the host nucleus, it interacts with the capsid portal vertex. This portal forms a ring in which genomic DNA is translocated into the capsid. TRM1 carries an endonuclease activity that plays an important role for the cleavage of concatemeric viral DNA into unit length genomes. In Homo sapiens (Human), this protein is Tripartite terminase subunit 1.